Here is a 1259-residue protein sequence, read N- to C-terminus: Zinc finger protein BRUTUS-like At1g74770 (1259 aa).

A helical membrane pass occupies residues 441-461 (LLYTSIHVLPLGLLKCVILWF). 2 stretches are compositionally biased toward basic and acidic residues: residues 904–916 (KEEK…ESKK) and 924–934 (EGDKEQTDKMS). The segment at 904–938 (KEEKDLERSESKKICRGSNQEGDKEQTDKMSQKVS) is disordered. The segment at 1018-1087 (PHSLIFGCNH…ANCSNTSCKS (70 aa)) adopts a CHY-type zinc-finger fold. Zn(2+)-binding residues include Cys-1025, His-1027, Cys-1038, Cys-1039, Cys-1045, Cys-1048, His-1049, His-1055, Cys-1067, Cys-1070, Cys-1080, Cys-1085, Cys-1094, Cys-1097, His-1108, Cys-1109, Cys-1112, Cys-1115, His-1127, Cys-1128, Cys-1131, Cys-1134, His-1142, and Cys-1144. The CTCHY-type zinc-finger motif lies at 1089–1152 (MGKYFCKICK…VCREKCLEDN (64 aa)). An RING-type; atypical zinc finger spans residues 1153–1195 (CPICHEYIFTSSSPVKALPCGHLMHSTCFQEYTCSHYTCPVCS).

In terms of assembly, binds zinc and iron ions.

The protein localises to the membrane. The protein resides in the nucleus. The protein operates within protein modification; protein ubiquitination. Probable E3 ubiquitin-protein ligase that may regulate the response to iron deficiency and thus contributes to iron homeostasis. The protein is Zinc finger protein BRUTUS-like At1g74770 of Arabidopsis thaliana (Mouse-ear cress).